Reading from the N-terminus, the 177-residue chain is Large ribosomal subunit protein bL9 (177 aa).

This sequence belongs to the bacterial ribosomal protein bL9 family.

Functionally, binds to the 23S rRNA. In Rhodopirellula baltica (strain DSM 10527 / NCIMB 13988 / SH1), this protein is Large ribosomal subunit protein bL9.